Here is a 304-residue protein sequence, read N- to C-terminus: Sperm microtubule inner protein 6 (304 aa).

Belongs to the SPMIP6 family. In terms of assembly, microtubule inner protein component of sperm flagellar doublet microtubules. Interacts with alpha-tubulin.

The protein localises to the cytoplasm. Its subcellular location is the cytoskeleton. It localises to the nucleus. It is found in the mitochondrion. The protein resides in the flagellum axoneme. Its function is as follows. May participate in intramanchette transport and midpiece formation of the sperm tail. May play a potential role in somatic cell proliferation. The protein is Sperm microtubule inner protein 6 (SPMIP6) of Bos taurus (Bovine).